A 641-amino-acid polypeptide reads, in one-letter code: SH2 domain-containing protein A (641 aa).

The disordered stretch occupies residues 355 to 384; sequence VNGNGTSMEWRPQNHEEDNSSTDSENTEMR. Residues 547-641 enclose the SH2 domain; that stretch reads WIEGFVTKEE…SRLGRIIRGI (95 aa).

Post-translationally, phosphorylated on tyrosine residues. As to expression, expressed in roots, leaves, stems and flowers.

The protein is SH2 domain-containing protein A of Arabidopsis thaliana (Mouse-ear cress).